Here is a 450-residue protein sequence, read N- to C-terminus: SAGA complex/transcription factor TFIID complex subunit Taf12 (450 aa).

Polar residues-rich tracts occupy residues 1-10 (MNGQHSSPGT), 19-29 (PVNQAQFSQQR), and 190-212 (QNRQASSANGNNTGTSTPVNAST). Disordered regions lie at residues 1–29 (MNGQHSSPGTPVQRPSAGPVNQAQFSQQR) and 190–281 (QNRQ…VEKS). Residues 217–236 (STASTPQLQQTQAQANAPQQ) show a composition bias toward low complexity. 2 stretches are compositionally biased toward polar residues: residues 237–246 (RINPETSSVP) and 255–281 (ANVSNESTELATSATQQSGLANNVEKS). Ser-297 carries the phosphoserine modification. Residues 338–413 (NGNRLLSKRK…HLERNWNIRL (76 aa)) enclose the Histone-fold domain. The segment at 426-450 (RKTGPTPSYQQKQNAIGTAKSLNKD) is disordered. Residues 430-441 (PTPSYQQKQNAI) are compositionally biased toward polar residues.

It belongs to the TAF12 family. Component of the 1.8 MDa SAGA (Spt-Ada-Gcn5 acetyltransferase) complex, which is composed of 19 subunits tra1, spt7, taf5, ngg1/ada3, sgf73, spt20, spt8, taf12, taf6, hfi1/ada1, ubp8, gcn5, ada2, spt3, sgf29, taf10, taf9, sgf11 and sus1. The SAGA complex is composed of 4 modules, namely the HAT (histone acetyltransferase) module (gcn5, ada2, ngg1/ada3 and sgf29), the DUB (deubiquitinating) module (ubp8, sgf11, sgf73 and sus1), the core or TAF (TBP-associated factor) module (taf5, taf6, taf9, taf10 and taf12), and the Tra1 or SPT (Suppressor of Ty) module (tra1, hfi1/ada1, spt3, spt7, spt8 and spt20). The Tra1/SPT module binds activators, the core module recruits TBP (TATA-binding protein), the HAT module contains the histone H3 acetyltransferase gcn5, and the DUB module comprises the histone H2B deubiquitinase ubp8. Component of the 1.2 MDa TFIID complex, which is composed of TATA-binding protein (TBP) and the 14 TBP-associated factors (TAFs). It comprises 1 copy of each taf1, taf2, taf3, taf7, taf8, taf11, taf13, 2 copies of each taf4, taf5, taf6, taf9, taf10, taf12, and 3 copies of taf14. In TFIID, taf12 heterodimerizes with taf4, forming ultimately an octamer consisting of a taf6-taf9 heterotetramer core flanked by taf4-taf12 dimers on either side, similar to the histone H2A-H2B-H3-H4 octamer.

The protein localises to the nucleus. Functions as a component of both the DNA-binding general transcription initiation factor complex TFIID and the transcription coactivator SAGA complex. Binding of TFIID to a promoter (with or without TATA element) is the initial step in pre-initiation complex (PIC) formation. TFIID plays a key role in the regulation of gene expression by RNA polymerase II through different activities such as transcription activator interaction, core promoter recognition and selectivity, TFIIA and TFIIB interaction, chromatin modification (histone acetylation by TAF1), facilitation of DNA opening and initiation of transcription. SAGA acts as a general cofactor required for essentially all RNA polymerase II transcription. At the promoters, SAGA is required for transcription pre-initiation complex (PIC) recruitment. It influences RNA polymerase II transcriptional activity through different activities such as TBP interaction (via core/TAF module) and promoter selectivity, interaction with transcription activators (via Tra1/SPT module), and chromatin modification through histone acetylation (via HAT module) and deubiquitination (via DUB module). SAGA preferentially acetylates histones H3 (to form H3K9ac, H3K14ac, H3K18ac and H3K23ac) and H2B and deubiquitinates histone H2B. SAGA interacts with DNA via upstream activating sequences (UASs). The protein is SAGA complex/transcription factor TFIID complex subunit Taf12 of Schizosaccharomyces pombe (strain 972 / ATCC 24843) (Fission yeast).